We begin with the raw amino-acid sequence, 41 residues long: Large ribosomal subunit protein bL36B (41 aa).

This sequence belongs to the bacterial ribosomal protein bL36 family.

This is Large ribosomal subunit protein bL36B from Actinobacillus pleuropneumoniae serotype 5b (strain L20).